A 408-amino-acid chain; its full sequence is Subtilisin-like protease 6 (408 aa).

An N-terminal signal peptide occupies residues 1-20 (MGFITKAIPIVLAALSTVDG). Residues 21-123 (AKILEAGPHA…RDTVVKATAI (103 aa)) constitute a propeptide that is removed on maturation. An Inhibitor I9 domain is found at 36–119 (KYIVVMKQDV…DFIERDTVVK (84 aa)). Residues 131-408 (SWGLARVGSK…GKLIYNGSGK (278 aa)) enclose the Peptidase S8 domain. Catalysis depends on charge relay system residues aspartate 163 and histidine 194. 3 N-linked (GlcNAc...) asparagine glycosylation sites follow: asparagine 248, asparagine 260, and asparagine 345. Serine 354 serves as the catalytic Charge relay system. N-linked (GlcNAc...) asparagine glycosylation occurs at asparagine 404.

Belongs to the peptidase S8 family.

The protein localises to the secreted. Functionally, secreted subtilisin-like serine protease with keratinolytic activity that contributes to pathogenicity. The chain is Subtilisin-like protease 6 (SUB6) from Arthroderma gypseum (strain ATCC MYA-4604 / CBS 118893) (Microsporum gypseum).